The chain runs to 160 residues: Small ribosomal subunit protein uS19v (160 aa).

Belongs to the universal ribosomal protein uS19 family.

The protein localises to the cytoplasm. In Arabidopsis thaliana (Mouse-ear cress), this protein is Small ribosomal subunit protein uS19v (RPS15F).